The following is a 391-amino-acid chain: Dual-specificity RNA methyltransferase RlmN (391 aa).

The active-site Proton acceptor is the glutamate 112. In terms of domain architecture, Radical SAM core spans 118-368; that stretch reads ESDRGTLCIS…VRTPRGRDIL (251 aa). Cysteines 125 and 371 form a disulfide. [4Fe-4S] cluster-binding residues include cysteine 132, cysteine 136, and cysteine 139. Residues 197 to 198, serine 229, 251 to 253, and asparagine 328 contribute to the S-adenosyl-L-methionine site; these read GE and SLH. Cysteine 371 serves as the catalytic S-methylcysteine intermediate.

Belongs to the radical SAM superfamily. RlmN family. Requires [4Fe-4S] cluster as cofactor.

The protein localises to the cytoplasm. It carries out the reaction adenosine(2503) in 23S rRNA + 2 reduced [2Fe-2S]-[ferredoxin] + 2 S-adenosyl-L-methionine = 2-methyladenosine(2503) in 23S rRNA + 5'-deoxyadenosine + L-methionine + 2 oxidized [2Fe-2S]-[ferredoxin] + S-adenosyl-L-homocysteine. The enzyme catalyses adenosine(37) in tRNA + 2 reduced [2Fe-2S]-[ferredoxin] + 2 S-adenosyl-L-methionine = 2-methyladenosine(37) in tRNA + 5'-deoxyadenosine + L-methionine + 2 oxidized [2Fe-2S]-[ferredoxin] + S-adenosyl-L-homocysteine. Specifically methylates position 2 of adenine 2503 in 23S rRNA and position 2 of adenine 37 in tRNAs. m2A2503 modification seems to play a crucial role in the proofreading step occurring at the peptidyl transferase center and thus would serve to optimize ribosomal fidelity. This chain is Dual-specificity RNA methyltransferase RlmN, found in Beijerinckia indica subsp. indica (strain ATCC 9039 / DSM 1715 / NCIMB 8712).